Here is a 286-residue protein sequence, read N- to C-terminus: Apoptosis inhibitor 1 (286 aa).

BIR repeat units follow at residues 29–96 and 131–199; these read LIER…CAYA and LQSR…CYFV. Zn(2+)-binding residues include cysteine 169, cysteine 172, histidine 189, and cysteine 196. Residues 238 to 274 form an RING-type zinc finger; that stretch reads CKVCLERQRDAVLMPCRHFCVCVQCYFGLDQKCPTCR.

Functionally, acts by blocking cellular apoptosis early in infection. Later, stimulates caspase-3-like protease activity and induces apoptosis, probably to favor the release of occluded virions. In Lepidoptera (butterflies and moths), this protein is Apoptosis inhibitor 1 (IAP1).